A 175-amino-acid chain; its full sequence is Probable DNA replication complex GINS protein PSF2 (175 aa).

The protein belongs to the GINS2/PSF2 family. As to quaternary structure, component of the GINS complex which is a heterotetramer of SLD5, PSF1, PSF2 and PSF3.

The protein localises to the nucleus. The GINS complex plays an essential role in the initiation of DNA replication. This is Probable DNA replication complex GINS protein PSF2 from Encephalitozoon cuniculi (strain GB-M1) (Microsporidian parasite).